The chain runs to 443 residues: Phosphomevalonate kinase ERG8 (443 aa).

160–170 (ANKTGLGSSAA) provides a ligand contact to ATP.

This sequence belongs to the GHMP kinase family. Mevalonate kinase subfamily.

The enzyme catalyses (R)-5-phosphomevalonate + ATP = (R)-5-diphosphomevalonate + ADP. The protein operates within isoprenoid biosynthesis; isopentenyl diphosphate biosynthesis via mevalonate pathway; isopentenyl diphosphate from (R)-mevalonate: step 2/3. Phosphomevalonate kinase; part of the second module of ergosterol biosynthesis pathway that includes the middle steps of the pathway. ERG8 converts 5-phosphomevalonate to 5-diphosphomevalonate. The second module is carried out in the vacuole and involves the formation of farnesyl diphosphate, which is also an important intermediate in the biosynthesis of ubiquinone, dolichol, heme and prenylated proteins. Activity by the mevalonate kinase ERG12 (FG05912) first converts mevalonate into 5-phosphomevalonate. 5-phosphomevalonate is then further converted to 5-diphosphomevalonate by the phosphomevalonate kinase ERG8 (FG09764). The diphosphomevalonate decarboxylase ERG19 (FG10424) then produces isopentenyl diphosphate. The isopentenyl-diphosphate delta-isomerase IDI1 (FG09722) then catalyzes the 1,3-allylic rearrangement of the homoallylic substrate isopentenyl (IPP) to its highly electrophilic allylic isomer, dimethylallyl diphosphate (DMAPP). Finally the farnesyl diphosphate synthase ERG20 (FG06784) catalyzes the sequential condensation of isopentenyl pyrophosphate with dimethylallyl pyrophosphate, and then with the resultant geranylpyrophosphate to the ultimate product farnesyl pyrophosphate. This chain is Phosphomevalonate kinase ERG8, found in Gibberella zeae (strain ATCC MYA-4620 / CBS 123657 / FGSC 9075 / NRRL 31084 / PH-1) (Wheat head blight fungus).